Here is a 377-residue protein sequence, read N- to C-terminus: Homoserine O-acetyltransferase (377 aa).

In terms of domain architecture, AB hydrolase-1 spans 48–347 (NVVLIEHALT…PVGHDAFLTE (300 aa)). The active-site Nucleophile is the Ser-143. Arg-213 lines the substrate pocket. Residues Asp-311 and His-341 contribute to the active site. A substrate-binding site is contributed by Asp-342.

Belongs to the AB hydrolase superfamily. MetX family. Homodimer.

It is found in the cytoplasm. The enzyme catalyses L-homoserine + acetyl-CoA = O-acetyl-L-homoserine + CoA. It participates in amino-acid biosynthesis; L-methionine biosynthesis via de novo pathway; O-acetyl-L-homoserine from L-homoserine: step 1/1. In terms of biological role, transfers an acetyl group from acetyl-CoA to L-homoserine, forming acetyl-L-homoserine. This chain is Homoserine O-acetyltransferase, found in Corynebacterium glutamicum (strain ATCC 13032 / DSM 20300 / JCM 1318 / BCRC 11384 / CCUG 27702 / LMG 3730 / NBRC 12168 / NCIMB 10025 / NRRL B-2784 / 534).